Here is a 203-residue protein sequence, read N- to C-terminus: Sarcosine oxidase subunit gamma (203 aa).

This sequence belongs to the SoxG family. Heterotetramer composed of subunits alpha (SoxA), beta (SoxB), gamma (SoxG) and delta (SoxD).

The protein resides in the cytoplasm. It catalyses the reaction sarcosine + (6S)-5,6,7,8-tetrahydrofolate + O2 = (6R)-5,10-methylene-5,6,7,8-tetrahydrofolate + glycine + H2O2. It carries out the reaction sarcosine + O2 + H2O = formaldehyde + glycine + H2O2. Functionally, in the presence of tetrahydrofolate, catalyzes the oxidative demethylation of sarcosine to yield glycine, 5,10-methylenetetrahydrofolate and hydrogen peroxide. In the absence of tetrahydrofolate, catalyzes the oxidative demethylation of sarcosine to yield glycine, formaldehyde and hydrogen peroxide. In Arthrobacter sp, this protein is Sarcosine oxidase subunit gamma (soxG).